Here is a 320-residue protein sequence, read N- to C-terminus: Aspartate carbamoyltransferase catalytic subunit (320 aa).

Carbamoyl phosphate-binding residues include R70 and T71. K98 is a binding site for L-aspartate. Positions 120, 149, and 152 each coordinate carbamoyl phosphate. L-aspartate contacts are provided by R182 and R237. Residues G278 and P279 each coordinate carbamoyl phosphate.

This sequence belongs to the aspartate/ornithine carbamoyltransferase superfamily. ATCase family. As to quaternary structure, heterododecamer (2C3:3R2) of six catalytic PyrB chains organized as two trimers (C3), and six regulatory PyrI chains organized as three dimers (R2).

It carries out the reaction carbamoyl phosphate + L-aspartate = N-carbamoyl-L-aspartate + phosphate + H(+). It participates in pyrimidine metabolism; UMP biosynthesis via de novo pathway; (S)-dihydroorotate from bicarbonate: step 2/3. Its function is as follows. Catalyzes the condensation of carbamoyl phosphate and aspartate to form carbamoyl aspartate and inorganic phosphate, the committed step in the de novo pyrimidine nucleotide biosynthesis pathway. This is Aspartate carbamoyltransferase catalytic subunit from Vesicomyosocius okutanii subsp. Calyptogena okutanii (strain HA).